The sequence spans 150 residues: Endoribonuclease YbeY (150 aa).

Residues His102, His106, and His112 each coordinate Zn(2+).

This sequence belongs to the endoribonuclease YbeY family. The cofactor is Zn(2+).

The protein resides in the cytoplasm. Functionally, single strand-specific metallo-endoribonuclease involved in late-stage 70S ribosome quality control and in maturation of the 3' terminus of the 16S rRNA. In Thermotoga maritima (strain ATCC 43589 / DSM 3109 / JCM 10099 / NBRC 100826 / MSB8), this protein is Endoribonuclease YbeY.